Consider the following 270-residue polypeptide: Phosphonoacetaldehyde hydrolase (270 aa).

Catalysis depends on Asp-11, which acts as the Nucleophile. Residues Asp-11 and Ala-13 each coordinate Mg(2+). The Schiff-base intermediate with substrate role is filled by Lys-53. Residue Asp-187 coordinates Mg(2+).

The protein belongs to the HAD-like hydrolase superfamily. PhnX family. As to quaternary structure, homodimer. Requires Mg(2+) as cofactor.

The catalysed reaction is phosphonoacetaldehyde + H2O = acetaldehyde + phosphate + H(+). Functionally, involved in phosphonate degradation. The sequence is that of Phosphonoacetaldehyde hydrolase from Salmonella gallinarum (strain 287/91 / NCTC 13346).